The following is a 294-amino-acid chain: Proline iminopeptidase (294 aa).

The region spanning 28–278 (PLLLLHGGPG…GCGHMPFVQE (251 aa)) is the AB hydrolase-1 domain. S106 acts as the Nucleophile in catalysis. The active site involves D245. The active-site Proton donor is the H272.

This sequence belongs to the peptidase S33 family. In terms of assembly, homotrimer.

The protein localises to the cell envelope. The catalysed reaction is Release of N-terminal proline from a peptide.. Its activity is regulated as follows. Inhibited by 3,4-DCI, but no significant effect on enzyme activity by pepstatin A, E-64, 1,10-phenanthroline or EDTA. Functionally, releases the N-terminal proline from various substrates. Cleaves Pro-betaNA (L-prolyl-beta-naphthylamide) effectively. The polypeptide is Proline iminopeptidase (pip) (Lactobacillus delbrueckii subsp. lactis).